Here is a 654-residue protein sequence, read N- to C-terminus: Acetyl-coenzyme A synthetase (654 aa).

Residues 191–194 (RRGQ) and threonine 315 each bind CoA. Residues 391-393 (GEP), 415-420 (DTWWQT), aspartate 506, and arginine 521 each bind ATP. Serine 529 contributes to the CoA binding site. Arginine 532 serves as a coordination point for ATP. Mg(2+) contacts are provided by valine 543, histidine 545, and valine 548. The residue at position 615 (lysine 615) is an N6-acetyllysine.

It belongs to the ATP-dependent AMP-binding enzyme family. Requires Mg(2+) as cofactor. Acetylated. Deacetylation by the SIR2-homolog deacetylase activates the enzyme.

It carries out the reaction acetate + ATP + CoA = acetyl-CoA + AMP + diphosphate. Its function is as follows. Catalyzes the conversion of acetate into acetyl-CoA (AcCoA), an essential intermediate at the junction of anabolic and catabolic pathways. AcsA undergoes a two-step reaction. In the first half reaction, AcsA combines acetate with ATP to form acetyl-adenylate (AcAMP) intermediate. In the second half reaction, it can then transfer the acetyl group from AcAMP to the sulfhydryl group of CoA, forming the product AcCoA. The protein is Acetyl-coenzyme A synthetase of Gemmatimonas aurantiaca (strain DSM 14586 / JCM 11422 / NBRC 100505 / T-27).